A 458-amino-acid polypeptide reads, in one-letter code: MKKKYFGTDGIRGKVGDFPITPDFFLRLGYAVGKVLLASDRQLAADKRPTVLIGKDTRISGYMLESALEAGFSAAGVDVLLSGPLPTPAVAYLVRALRIQAGAVISASHNPFDDNGIKFFSSAGSKLPDSMELQIEAELDQPMKTTPSIKLGRVQRLRDAAGRYIEFCKSTFPNQLDLRGLRIVVDCANGADYHIAGHVMHELGADVITTHASPDGFNINYECGATHIETLQGSILQHKADIGIAVDGDGDRVLMVSREGVLYDGDSLAYIIAKHRQQLGELQGGVAGTLMTNLAVEQAFERLGIPFARANVGDRYVSELLQQNDWYLGAENSGHIICRDKHTTGDGIISALQVLYALRDTGLTLADFMRDVPFFPQRLINVKVSGNFDFRSNPAVAACKNEAEQALGNDGRILLRASGTEPLIRVMVEGKVLQQTDYWAEKIAETIRQQAASSMTGS.

The active-site Phosphoserine intermediate is serine 108. Mg(2+)-binding residues include serine 108, aspartate 247, aspartate 249, and aspartate 251. Serine 108 is modified (phosphoserine).

It belongs to the phosphohexose mutase family. Mg(2+) is required as a cofactor. In terms of processing, activated by phosphorylation.

It carries out the reaction alpha-D-glucosamine 1-phosphate = D-glucosamine 6-phosphate. In terms of biological role, catalyzes the conversion of glucosamine-6-phosphate to glucosamine-1-phosphate. This is Phosphoglucosamine mutase from Nitrosomonas europaea (strain ATCC 19718 / CIP 103999 / KCTC 2705 / NBRC 14298).